Reading from the N-terminus, the 1179-residue chain is Tubulin glycylase 3B (1179 aa).

Residues 177-199 are compositionally biased toward polar residues; that stretch reads NKGQTNNSNRENGGNFHSEQSPK. Disordered regions lie at residues 177 to 208, 250 to 278, 592 to 625, and 853 to 890; these read NKGQ…VVSG, QQPQ…LPLS, KVLS…AVQQ, and QKQH…LKQD. Over residues 592-601 the composition is skewed to basic and acidic residues; sequence KVLSNTKSKD. Polar residues-rich tracts occupy residues 614-625 and 881-890; these read KSKSNNQNAVQQ and AQSSTSLKQD. The 363-residue stretch at 790–1152 folds into the TTL domain; sequence FIDFYETVDF…SMAKKGTKKN (363 aa). ATP is bound by residues 965 to 968, Lys978, and Asp980; that span reads QKYI.

It is found in the cell projection. It localises to the cilium. Its subcellular location is the cytoplasm. The protein localises to the cytoskeleton. The protein resides in the cilium axoneme. Its function is as follows. Polyglycylase which modifies tubulin, generating side chains of glycine on the gamma-carboxyl groups of specific glutamate residues within the C-terminal tail of tubulin. Polyglycylates tubulin, with a preference for alpha-tubulin toward beta-tubulin. In Tetrahymena thermophila (strain SB210), this protein is Tubulin glycylase 3B (TTLL3B).